The following is a 99-amino-acid chain: Small ribosomal subunit protein uS19 (99 aa).

The segment at 76–99 (PTRSFRGHAGGGKAEKGGSAPRKK) is disordered.

Belongs to the universal ribosomal protein uS19 family.

Protein S19 forms a complex with S13 that binds strongly to the 16S ribosomal RNA. This Pelodictyon phaeoclathratiforme (strain DSM 5477 / BU-1) protein is Small ribosomal subunit protein uS19.